The sequence spans 211 residues: Large ribosomal subunit protein uL3 (211 aa).

N5-methylglutamine is present on Gln-150.

The protein belongs to the universal ribosomal protein uL3 family. In terms of assembly, part of the 50S ribosomal subunit. Forms a cluster with proteins L14 and L19. Post-translationally, methylated by PrmB.

Functionally, one of the primary rRNA binding proteins, it binds directly near the 3'-end of the 23S rRNA, where it nucleates assembly of the 50S subunit. The polypeptide is Large ribosomal subunit protein uL3 (Pseudomonas fluorescens (strain ATCC BAA-477 / NRRL B-23932 / Pf-5)).